The following is a 396-amino-acid chain: DNA polymerase IV (396 aa).

A UmuC domain is found at 2–182; the sequence is ILHVDMDAFY…LPVSRLWGVG (181 aa). Residues D6 and D100 each contribute to the Mg(2+) site. E101 is a catalytic residue.

The protein belongs to the DNA polymerase type-Y family. Monomer. Mg(2+) is required as a cofactor.

The protein resides in the cytoplasm. The catalysed reaction is DNA(n) + a 2'-deoxyribonucleoside 5'-triphosphate = DNA(n+1) + diphosphate. Its function is as follows. Poorly processive, error-prone DNA polymerase involved in untargeted mutagenesis. Copies undamaged DNA at stalled replication forks, which arise in vivo from mismatched or misaligned primer ends. These misaligned primers can be extended by PolIV. Exhibits no 3'-5' exonuclease (proofreading) activity. May be involved in translesional synthesis, in conjunction with the beta clamp from PolIII. The sequence is that of DNA polymerase IV from Rhodopirellula baltica (strain DSM 10527 / NCIMB 13988 / SH1).